The chain runs to 330 residues: Anthranilate phosphoribosyltransferase (330 aa).

5-phospho-alpha-D-ribose 1-diphosphate is bound by residues Gly75, 78–79 (GD), Thr83, 85–88 (NVST), 103–111 (KHGNRAASS), and Ala115. Anthranilate is bound at residue Gly75. Ser87 is a Mg(2+) binding site. Residue Asn106 participates in anthranilate binding. Arg161 provides a ligand contact to anthranilate. 2 residues coordinate Mg(2+): Asp220 and Glu221.

Belongs to the anthranilate phosphoribosyltransferase family. As to quaternary structure, homodimer. The cofactor is Mg(2+).

The catalysed reaction is N-(5-phospho-beta-D-ribosyl)anthranilate + diphosphate = 5-phospho-alpha-D-ribose 1-diphosphate + anthranilate. The protein operates within amino-acid biosynthesis; L-tryptophan biosynthesis; L-tryptophan from chorismate: step 2/5. In terms of biological role, catalyzes the transfer of the phosphoribosyl group of 5-phosphorylribose-1-pyrophosphate (PRPP) to anthranilate to yield N-(5'-phosphoribosyl)-anthranilate (PRA). In Erythrobacter litoralis (strain HTCC2594), this protein is Anthranilate phosphoribosyltransferase.